Consider the following 339-residue polypeptide: UDP-N-acetylglucosamine--N-acetylmuramyl-(pentapeptide) pyrophosphoryl-undecaprenol N-acetylglucosamine transferase (339 aa).

UDP-N-acetyl-alpha-D-glucosamine contacts are provided by residues 9-11 (TGG), asparagine 119, arginine 160, serine 188, and glutamine 280.

Belongs to the glycosyltransferase 28 family. MurG subfamily.

Its subcellular location is the cell inner membrane. The enzyme catalyses di-trans,octa-cis-undecaprenyl diphospho-N-acetyl-alpha-D-muramoyl-L-alanyl-D-glutamyl-meso-2,6-diaminopimeloyl-D-alanyl-D-alanine + UDP-N-acetyl-alpha-D-glucosamine = di-trans,octa-cis-undecaprenyl diphospho-[N-acetyl-alpha-D-glucosaminyl-(1-&gt;4)]-N-acetyl-alpha-D-muramoyl-L-alanyl-D-glutamyl-meso-2,6-diaminopimeloyl-D-alanyl-D-alanine + UDP + H(+). The protein operates within cell wall biogenesis; peptidoglycan biosynthesis. Cell wall formation. Catalyzes the transfer of a GlcNAc subunit on undecaprenyl-pyrophosphoryl-MurNAc-pentapeptide (lipid intermediate I) to form undecaprenyl-pyrophosphoryl-MurNAc-(pentapeptide)GlcNAc (lipid intermediate II). This Thermus thermophilus (strain ATCC BAA-163 / DSM 7039 / HB27) protein is UDP-N-acetylglucosamine--N-acetylmuramyl-(pentapeptide) pyrophosphoryl-undecaprenol N-acetylglucosamine transferase.